The sequence spans 384 residues: Carbamoyl phosphate synthase small chain (384 aa).

Residues methionine 1–glutamine 192 form a CPSase region. Positions 51, 244, and 246 each coordinate L-glutamine. A Glutamine amidotransferase type-1 domain is found at threonine 196–glutamate 381. The Nucleophile role is filled by cysteine 272. Residues methionine 273, glutamine 276, asparagine 312, glycine 314, and phenylalanine 315 each coordinate L-glutamine. Residues histidine 354 and glutamate 356 contribute to the active site.

The protein belongs to the CarA family. Composed of two chains; the small (or glutamine) chain promotes the hydrolysis of glutamine to ammonia, which is used by the large (or ammonia) chain to synthesize carbamoyl phosphate. Tetramer of heterodimers (alpha,beta)4.

The catalysed reaction is hydrogencarbonate + L-glutamine + 2 ATP + H2O = carbamoyl phosphate + L-glutamate + 2 ADP + phosphate + 2 H(+). It catalyses the reaction L-glutamine + H2O = L-glutamate + NH4(+). Its pathway is amino-acid biosynthesis; L-arginine biosynthesis; carbamoyl phosphate from bicarbonate: step 1/1. The protein operates within pyrimidine metabolism; UMP biosynthesis via de novo pathway; (S)-dihydroorotate from bicarbonate: step 1/3. Small subunit of the glutamine-dependent carbamoyl phosphate synthetase (CPSase). CPSase catalyzes the formation of carbamoyl phosphate from the ammonia moiety of glutamine, carbonate, and phosphate donated by ATP, constituting the first step of 2 biosynthetic pathways, one leading to arginine and/or urea and the other to pyrimidine nucleotides. The small subunit (glutamine amidotransferase) binds and cleaves glutamine to supply the large subunit with the substrate ammonia. This Synechocystis sp. (strain ATCC 27184 / PCC 6803 / Kazusa) protein is Carbamoyl phosphate synthase small chain.